Consider the following 401-residue polypeptide: Large ribosomal subunit protein uL3 (401 aa).

The interval 1-21 is disordered; sequence MSHRKFSAPRHGHMGFTPKKR.

This sequence belongs to the universal ribosomal protein uL3 family.

Its subcellular location is the cytoplasm. The L3 protein is a component of the large subunit of cytoplasmic ribosomes. The polypeptide is Large ribosomal subunit protein uL3 (rpl-3) (Caenorhabditis briggsae).